We begin with the raw amino-acid sequence, 441 residues long: Keratin, type I cytoskeletal 17 (441 aa).

The interval 1–23 (MTTTIRHFSSGSIKGSSGLAGGS) is disordered. The tract at residues 1–91 (MTTTIRHFSS…GGVDGLLVGG (91 aa)) is head. Residues 9 to 23 (SSGSIKGSSGLAGGS) are compositionally biased toward low complexity. S12 is subject to Phosphoserine. A Glycyl lysine isopeptide (Lys-Gly) (interchain with G-Cter in SUMO1); alternate cross-link involves residue K14. A Glycyl lysine isopeptide (Lys-Gly) (interchain with G-Cter in SUMO2); alternate cross-link involves residue K14. Phosphoserine is present on residues S24, S30, S32, and S37. S42 carries the phosphoserine; by RPS6KA1 modification. A coil 1A region spans residues 92-128 (EKATMQNLNDRLASYLDKVRALEEANTELELKIRDWY). Residues 92–403 (EKATMQNLND…RLLEGEDAHL (312 aa)) form the IF rod domain. Phosphothreonine is present on T118. The interval 129–146 (QKQAPGPAPDYSSYFKTI) is linker 1. The coil 1B stretch occupies residues 147-238 (EDLRNKIHTA…NHEEEMKALR (92 aa)). The tract at residues 239–258 (GQVGGEINVEMDAAPGVDLS) is linker 12. Residues 259–400 (RILNEMRDQY…TYRRLLEGED (142 aa)) form a coil 2 region. A Glycyl lysine isopeptide (Lys-Gly) (interchain with G-Cter in SUMO2) cross-link involves residue K286. T287 is modified (phosphothreonine). A Phosphoserine modification is found at S331. A tail region spans residues 401–441 (AHLTQYKTKEPVTTRQVRTIVEEVQDGRVISSREQVHQTSH). Residues K407 and K409 each participate in a glycyl lysine isopeptide (Lys-Gly) (interchain with G-Cter in SUMO1); alternate cross-link. Residues K407 and K409 each participate in a glycyl lysine isopeptide (Lys-Gly) (interchain with G-Cter in SUMO2); alternate cross-link.

This sequence belongs to the intermediate filament family. As to quaternary structure, heterodimer of a type I and a type II keratin. KRT17 associates with KRT6 isomers (KRT6A or KRT6B). Interacts with TRADD and SFN. Phosphorylation at Ser-42 occurs in a growth- and stress-dependent fashion in skin keratinocytes, it has no effect on filament organization.

The protein localises to the cytoplasm. Its function is as follows. Type I keratin involved in the formation and maintenance of various skin appendages, specifically in determining shape and orientation of hair. Required for the correct growth of hair follicles, in particular for the persistence of the anagen (growth) state. Modulates the function of TNF-alpha in the specific context of hair cycling. Regulates protein synthesis and epithelial cell growth through binding to the adapter protein SFN and by stimulating Akt/mTOR pathway. Involved in tissue repair. May be a marker of basal cell differentiation in complex epithelia and therefore indicative of a certain type of epithelial 'stem cells'. Acts as a promoter of epithelial proliferation by acting a regulator of immune response in skin: promotes Th1/Th17-dominated immune environment contributing to the development of basaloid skin tumors. May act as an autoantigen in the immunopathogenesis of psoriasis, with certain peptide regions being a major target for autoreactive T-cells and hence causing their proliferation. This chain is Keratin, type I cytoskeletal 17, found in Bos taurus (Bovine).